The sequence spans 235 residues: 1-(5-phosphoribosyl)-5-[(5-phosphoribosylamino)methylideneamino] imidazole-4-carboxamide isomerase (235 aa).

Catalysis depends on D8, which acts as the Proton acceptor. The active-site Proton donor is D127.

This sequence belongs to the HisA/HisF family.

It is found in the cytoplasm. The enzyme catalyses 1-(5-phospho-beta-D-ribosyl)-5-[(5-phospho-beta-D-ribosylamino)methylideneamino]imidazole-4-carboxamide = 5-[(5-phospho-1-deoxy-D-ribulos-1-ylimino)methylamino]-1-(5-phospho-beta-D-ribosyl)imidazole-4-carboxamide. The protein operates within amino-acid biosynthesis; L-histidine biosynthesis; L-histidine from 5-phospho-alpha-D-ribose 1-diphosphate: step 4/9. This Aliarcobacter butzleri (strain RM4018) (Arcobacter butzleri) protein is 1-(5-phosphoribosyl)-5-[(5-phosphoribosylamino)methylideneamino] imidazole-4-carboxamide isomerase.